The chain runs to 567 residues: Mitogen-activated protein kinase 16 (567 aa).

Residues 25–316 (YRIEEVIGKG…AEEALADVYF (292 aa)) enclose the Protein kinase domain. Residues 31 to 39 (IGKGSYGVV) and lysine 54 contribute to the ATP site. The Proton acceptor role is filled by aspartate 151. At threonine 187 the chain carries Phosphothreonine. The TXY motif lies at 187–189 (TDY). Tyrosine 189 bears the Phosphotyrosine mark. Threonine 192 carries the post-translational modification Phosphothreonine. Disordered regions lie at residues 428-455 (AQQS…ADRN) and 512-567 (PAAA…SRWY). A compositionally biased stretch (basic and acidic residues) spans 443–453 (SIRDERPRGAD). A compositionally biased stretch (polar residues) spans 545-567 (KPNTQYIPQKVSAAQDTAMSRWY).

This sequence belongs to the protein kinase superfamily. CMGC Ser/Thr protein kinase family. MAP kinase subfamily. In terms of processing, dually phosphorylated on Thr-187 and Tyr-189, which activates the enzyme.

It catalyses the reaction L-seryl-[protein] + ATP = O-phospho-L-seryl-[protein] + ADP + H(+). The catalysed reaction is L-threonyl-[protein] + ATP = O-phospho-L-threonyl-[protein] + ADP + H(+). With respect to regulation, activated by threonine and tyrosine phosphorylation. The chain is Mitogen-activated protein kinase 16 (MPK16) from Arabidopsis thaliana (Mouse-ear cress).